Consider the following 68-residue polypeptide: MARGNQRDLARQKNLKKQKDMAKNQKKSGDPKKRMESDAEILRQKQAAADARREAEKLEKLKAEKTRR.

2 stretches are compositionally biased toward basic and acidic residues: residues 1–43 and 50–68; these read MARG…EILR and DARR…KTRR. A disordered region spans residues 1–68; sequence MARGNQRDLA…EKLKAEKTRR (68 aa). Phosphoserine is present on Ser37.

It belongs to the SERF family.

The protein resides in the cytoplasm. It localises to the nucleus. The polypeptide is SERF-like protein YDL085C-A (Saccharomyces cerevisiae (strain ATCC 204508 / S288c) (Baker's yeast)).